Consider the following 95-residue polypeptide: Small ribosomal subunit protein bS20 (95 aa).

Belongs to the bacterial ribosomal protein bS20 family.

Functionally, binds directly to 16S ribosomal RNA. This chain is Small ribosomal subunit protein bS20, found in Fervidobacterium nodosum (strain ATCC 35602 / DSM 5306 / Rt17-B1).